The sequence spans 288 residues: 33 kDa chaperonin (288 aa).

Cystine bridges form between C235/C237 and C268/C271.

This sequence belongs to the HSP33 family. Under oxidizing conditions two disulfide bonds are formed involving the reactive cysteines. Under reducing conditions zinc is bound to the reactive cysteines and the protein is inactive.

Its subcellular location is the cytoplasm. In terms of biological role, redox regulated molecular chaperone. Protects both thermally unfolding and oxidatively damaged proteins from irreversible aggregation. Plays an important role in the bacterial defense system toward oxidative stress. This Streptococcus thermophilus (strain ATCC BAA-250 / LMG 18311) protein is 33 kDa chaperonin.